The chain runs to 790 residues: GATOR2 complex protein WDR24 (790 aa).

WD repeat units follow at residues 72-112 (SLNL…RNKQ), 118-158 (EHKR…SVST), 161-201 (GQSE…RCER), 205-245 (AHNG…AKEM), 249-291 (QTIA…VPAA), and 295-338 (EHRD…VERA). Serine 155 is modified (phosphoserine; by AMPK). Phosphoserine is present on residues serine 470 and serine 496. A Phosphothreonine modification is found at threonine 581. Residues serine 594 and serine 598 each carry the phosphoserine modification. A C4-type zinc finger spans residues 718–740 (NCSHCKRPMSSRGWVCDRCHRCA). Positions 719, 722, 733, 736, 743, 746, 757, 760, 762, 765, 768, 779, 783, 785, and 787 each coordinate Zn(2+). The segment at 741 to 790 (SMCAVCHHVVKGLFVWCQGCSHGGHLQHIMKWLEGSSHCPAGCGHLCEYS) adopts an RING-type; atypical zinc-finger fold.

Belongs to the WD repeat WDR24 family. In terms of assembly, component of the GATOR2 subcomplex, composed of MIOS, SEC13, SEH1L, WDR24 and WDR59. The GATOR2 complex interacts with CASTOR1 and CASTOR2; the interaction is negatively regulated by arginine. The GATOR2 complex interacts with SESN1, SESN2 and SESN3; the interaction is negatively regulated by amino acids. SESN1, SESN2 and SESN3 convey leucine availability via direct interaction with SEH1L and WDR24. Phosphorylation at Ser-155 by AMPK in response to glucose deprivation inactivates WDR24 by promoting interaction with 14-3-3 proteins, such as YWHAG, preventing assembly of the GATOR2 complex. Post-translationally, autoubiquitinated; MIOS is required to prevent autoubiquitination.

Its subcellular location is the lysosome membrane. It catalyses the reaction S-ubiquitinyl-[E2 ubiquitin-conjugating enzyme]-L-cysteine + [acceptor protein]-L-lysine = [E2 ubiquitin-conjugating enzyme]-L-cysteine + N(6)-ubiquitinyl-[acceptor protein]-L-lysine.. Its pathway is protein modification; protein ubiquitination. The GATOR2 complex is negatively regulated by the upstream amino acid sensors CASTOR1 and SESN2, which sequester the GATOR2 complex in absence of amino acids. In the presence of abundant amino acids, GATOR2 is released from CASTOR1 and SESN2 and activated. Functionally, catalytic component of the GATOR2 complex, a multiprotein complex that acts as an activator of the amino acid-sensing branch of the mTORC1 signaling pathway. The GATOR2 complex indirectly activates mTORC1 through the inhibition of the GATOR1 subcomplex. GATOR2 probably acts as an E3 ubiquitin-protein ligase toward GATOR1. In the presence of abundant amino acids, the GATOR2 complex mediates ubiquitination of the NPRL2 core component of the GATOR1 complex, leading to GATOR1 inactivation. In the absence of amino acids, GATOR2 is inhibited, activating the GATOR1 complex. In addition to its role in regulation of the mTORC1 complex, promotes the acidification of lysosomes and facilitates autophagic flux. Within the GATOR2 complex, WDR24 constitutes the catalytic subunit that mediates 'Lys-6'-linked ubiquitination of NPRL2. This Homo sapiens (Human) protein is GATOR2 complex protein WDR24.